The sequence spans 89 residues: Small ribosomal subunit protein bS20 (89 aa).

It belongs to the bacterial ribosomal protein bS20 family.

Binds directly to 16S ribosomal RNA. This Xanthobacter autotrophicus (strain ATCC BAA-1158 / Py2) protein is Small ribosomal subunit protein bS20.